The primary structure comprises 501 residues: Cryptochrome-1 (501 aa).

Residues 5–134 (KKTIVWFRRD…SVQSYNGDLC (130 aa)) form the Photolyase/cryptochrome alpha/beta domain. Residues Tyr231 and 243–247 (TSLLS) contribute to the FAD site. Arg356 serves as a coordination point for ATP. Asp386 and Asp388 together coordinate FAD. Residue Asp405 participates in ATP binding.

It belongs to the DNA photolyase class-1 family. In terms of assembly, homodimer. Requires FAD as cofactor. (6R)-5,10-methylene-5,6,7,8-tetrahydrofolate serves as cofactor.

Its function is as follows. Mediates blue light-induced gene expression in addition to its role in blue light-dependent inhibition of stem growth. The sequence is that of Cryptochrome-1 (PHR1) from Sinapis alba (White mustard).